A 183-amino-acid polypeptide reads, in one-letter code: Adenine phosphoribosyltransferase (183 aa).

Belongs to the purine/pyrimidine phosphoribosyltransferase family. As to quaternary structure, homodimer.

The protein localises to the cytoplasm. The enzyme catalyses AMP + diphosphate = 5-phospho-alpha-D-ribose 1-diphosphate + adenine. It functions in the pathway purine metabolism; AMP biosynthesis via salvage pathway; AMP from adenine: step 1/1. Functionally, catalyzes a salvage reaction resulting in the formation of AMP, that is energically less costly than de novo synthesis. The sequence is that of Adenine phosphoribosyltransferase from Shigella flexneri serotype 5b (strain 8401).